Reading from the N-terminus, the 148-residue chain is Large ribosomal subunit protein bL9 (148 aa).

This sequence belongs to the bacterial ribosomal protein bL9 family.

In terms of biological role, binds to the 23S rRNA. The sequence is that of Large ribosomal subunit protein bL9 from Aliarcobacter butzleri (strain RM4018) (Arcobacter butzleri).